A 129-amino-acid chain; its full sequence is Small ribosomal subunit protein uS11 (129 aa).

This sequence belongs to the universal ribosomal protein uS11 family. As to quaternary structure, part of the 30S ribosomal subunit. Interacts with proteins S7 and S18. Binds to IF-3.

Functionally, located on the platform of the 30S subunit, it bridges several disparate RNA helices of the 16S rRNA. Forms part of the Shine-Dalgarno cleft in the 70S ribosome. In Salmonella typhi, this protein is Small ribosomal subunit protein uS11.